We begin with the raw amino-acid sequence, 310 residues long: N-acetyl-gamma-glutamyl-phosphate reductase (310 aa).

Cys116 is an active-site residue.

This sequence belongs to the NAGSA dehydrogenase family. Type 2 subfamily.

It localises to the cytoplasm. It catalyses the reaction N-acetyl-L-glutamate 5-semialdehyde + phosphate + NADP(+) = N-acetyl-L-glutamyl 5-phosphate + NADPH + H(+). Its pathway is amino-acid biosynthesis; L-arginine biosynthesis; N(2)-acetyl-L-ornithine from L-glutamate: step 3/4. In terms of biological role, catalyzes the NADPH-dependent reduction of N-acetyl-5-glutamyl phosphate to yield N-acetyl-L-glutamate 5-semialdehyde. The sequence is that of N-acetyl-gamma-glutamyl-phosphate reductase from Chelativorans sp. (strain BNC1).